The following is a 1423-amino-acid chain: Autophagy-related protein 11 (1423 aa).

2 coiled-coil regions span residues 551–589 (DDEL…QSQA) and 625–978 (SEGT…ASEL). Disordered stretches follow at residues 583–660 (LHRQ…SNRA) and 1028–1048 (RAER…SLRK). Residues 585-602 (RQSQASRPGNLFQPQTNS) are compositionally biased toward polar residues. A compositionally biased stretch (basic and acidic residues) spans 631–648 (LLRRISELENELREEKQR). 2 stretches are compositionally biased toward polar residues: residues 650-660 (SRIQNDLSNRA) and 1034-1047 (QNPN…TSLR). Residues 1102-1130 (HRIKEVEHKARKWQKEARSYRDRAHIAQK) are a coiled coil. Residues 1327 to 1423 (SLRAAAPETP…DYTYESPGKK (97 aa)) form a disordered region. The span at 1383–1395 (KTAEPRRMLDRQE) shows a compositional bias: basic and acidic residues.

This sequence belongs to the ATG11 family. In terms of assembly, homodimer and potential homooligomers. Interacts with ATG1 kinase and the ATG19 and ATG34 cargo protein transporters. Interacts with ATG9, ATG17 and ATG20.

The protein resides in the preautophagosomal structure membrane. It localises to the vacuole membrane. In terms of biological role, involved in cytoplasm to vacuole transport (Cvt), pexophagy, mitophagy and nucleophagy. Recruits mitochondria for their selective degradation via autophagy (mitophagy) during starvation, through its interaction with ATG32. Works as scaffold proteins that recruit ATG proteins to the pre-autophagosome (PAS), the site of vesicle/autophagosome formation. Required for ATG9 anterograde transport from the mitochondria to the PAS. Also recruits the ATG19-prAPE1 complex to the PAS. Required for the Cvt vesicles completion. Plays a role in morphological differentiation and cephalosporin production. The polypeptide is Autophagy-related protein 11 (Hapsidospora chrysogena (Acremonium chrysogenum)).